Reading from the N-terminus, the 419-residue chain is DNA primase DnaG (419 aa).

The Toprim domain occupies 168–244 (DTIIVVEGRS…KVDYVARAPE (77 aa)). 3 residues coordinate Mg(2+): glutamate 174, aspartate 218, and aspartate 220. Composition is skewed to basic and acidic residues over residues 280–291 (KPAEEAVKREEE) and 306–316 (KAAKPPEEKPP). Residues 280–317 (KPAEEAVKREEEAAAEAKPPAPAVQEKAAKPPEEKPPT) form a disordered region.

This sequence belongs to the archaeal DnaG primase family. As to quaternary structure, forms a ternary complex with MCM helicase and DNA. Component of the archaeal exosome complex. Mg(2+) is required as a cofactor.

It carries out the reaction ssDNA + n NTP = ssDNA/pppN(pN)n-1 hybrid + (n-1) diphosphate.. Functionally, RNA polymerase that catalyzes the synthesis of short RNA molecules used as primers for DNA polymerase during DNA replication. Also part of the exosome, which is a complex involved in RNA degradation. Acts as a poly(A)-binding protein that enhances the interaction between heteromeric, adenine-rich transcripts and the exosome. The protein is DNA primase DnaG of Aeropyrum pernix (strain ATCC 700893 / DSM 11879 / JCM 9820 / NBRC 100138 / K1).